Here is a 411-residue protein sequence, read N- to C-terminus: Citrate synthase (411 aa).

Residues His304 and Asp363 contribute to the active site.

It belongs to the citrate synthase family.

It carries out the reaction oxaloacetate + acetyl-CoA + H2O = citrate + CoA + H(+). It participates in carbohydrate metabolism; tricarboxylic acid cycle; isocitrate from oxaloacetate: step 1/2. In Rickettsia australis, this protein is Citrate synthase (gltA).